A 624-amino-acid polypeptide reads, in one-letter code: Polycomb group protein EMF2A (624 aa).

The C2H2-type zinc finger occupies 338–359; the sequence is CPFCLVRCGNFKGLECHMTSSH. The disordered stretch occupies residues 420 to 445; sequence DAHIMESGSPEETQAESEDDVQEENE. The span at 432-445 shows a compositional bias: acidic residues; the sequence is TQAESEDDVQEENE. Positions 474-609 are VEFS-box; that stretch reads LSANRADPRN…SARTMDTCNR (136 aa).

It belongs to the VEFS (VRN2-EMF2-FIS2-SU(Z)12) family. Component of the polycomb repressive complex 2 (PRC2), which methylates 'Lys-27' residues of histone H3 (H3K27me3), leading to transcriptional repression of the affected target gene. In terms of tissue distribution, widely expressed. Highly expressed in shoot apical meristem and inflorescence meristem. Expressed in roots, leaves and immature seeds.

In terms of biological role, polycomb group (PcG) protein. PcG proteins act by forming multiprotein complexes, which are required to maintain the transcriptionally repressive state of homeotic genes throughout development. PcG proteins are not required to initiate repression, but to maintain it during later stages of development. They act via the methylation of histones, rendering chromatin heritably changed in its expressibility. The protein is Polycomb group protein EMF2A of Oryza sativa subsp. japonica (Rice).